Consider the following 508-residue polypeptide: Cobalamin biosynthesis protein CobIJ (508 aa).

The tract at residues 1–243 (MSARGTLWGV…AMLPGGRRRA (243 aa)) is precorrin-2 C20-methyltransferase. A precorrin-3 methylase region spans residues 244–508 (LLTGTVAVVG…TATKSSRHSD (265 aa)). A disordered region spans residues 489–508 (PRRYPEAGRATATKSSRHSD).

Belongs to the precorrin methyltransferase family.

It carries out the reaction precorrin-2 + S-adenosyl-L-methionine = precorrin-3A + S-adenosyl-L-homocysteine + H(+). The catalysed reaction is precorrin-3B + S-adenosyl-L-methionine = precorrin-4 + S-adenosyl-L-homocysteine + 3 H(+). Its pathway is cofactor biosynthesis; adenosylcobalamin biosynthesis; cob(II)yrinate a,c-diamide from precorrin-2 (aerobic route): step 1/10. It functions in the pathway cofactor biosynthesis; adenosylcobalamin biosynthesis; cob(II)yrinate a,c-diamide from precorrin-2 (aerobic route): step 3/10. Methylates precorrin-2 at the C-20 position to produce precorrin-3A. This is Cobalamin biosynthesis protein CobIJ (cobIJ) from Mycobacterium bovis (strain ATCC BAA-935 / AF2122/97).